We begin with the raw amino-acid sequence, 166 residues long: FMN reductase (NADH) RutF (166 aa).

It belongs to the non-flavoprotein flavin reductase family. RutF subfamily.

The catalysed reaction is FMNH2 + NAD(+) = FMN + NADH + 2 H(+). Its function is as follows. Catalyzes the reduction of FMN to FMNH2 which is used to reduce pyrimidine by RutA via the Rut pathway. The polypeptide is FMN reductase (NADH) RutF (Cronobacter turicensis (strain DSM 18703 / CCUG 55852 / LMG 23827 / z3032)).